A 195-amino-acid polypeptide reads, in one-letter code: Probable GTP-binding protein EngB (195 aa).

The EngB-type G domain maps to 22 to 195 (GYPEIALVGR…WKWIEDRMGE (174 aa)). GTP-binding positions include 30–37 (GRSNVGKS), 57–61 (GKTQT), 75–78 (DVPG), 142–145 (TKSD), and 173–176 (MFSA). Ser-37 and Thr-59 together coordinate Mg(2+).

The protein belongs to the TRAFAC class TrmE-Era-EngA-EngB-Septin-like GTPase superfamily. EngB GTPase family. It depends on Mg(2+) as a cofactor.

In terms of biological role, necessary for normal cell division and for the maintenance of normal septation. The protein is Probable GTP-binding protein EngB of Pediococcus pentosaceus (strain ATCC 25745 / CCUG 21536 / LMG 10740 / 183-1w).